Consider the following 244-residue polypeptide: Phosphoadenosine 5'-phosphosulfate reductase (244 aa).

The active-site Nucleophile; cysteine thiosulfonate intermediate is the Cys-239.

The protein belongs to the PAPS reductase family. CysH subfamily.

The protein localises to the cytoplasm. The enzyme catalyses [thioredoxin]-disulfide + sulfite + adenosine 3',5'-bisphosphate + 2 H(+) = [thioredoxin]-dithiol + 3'-phosphoadenylyl sulfate. It functions in the pathway sulfur metabolism; hydrogen sulfide biosynthesis; sulfite from sulfate: step 3/3. In terms of biological role, catalyzes the formation of sulfite from phosphoadenosine 5'-phosphosulfate (PAPS) using thioredoxin as an electron donor. The chain is Phosphoadenosine 5'-phosphosulfate reductase from Pectobacterium carotovorum subsp. carotovorum (strain PC1).